The following is a 143-amino-acid chain: Large ribosomal subunit protein uL11 (143 aa).

This sequence belongs to the universal ribosomal protein uL11 family. In terms of assembly, part of the ribosomal stalk of the 50S ribosomal subunit. Interacts with L10 and the large rRNA to form the base of the stalk. L10 forms an elongated spine to which L12 dimers bind in a sequential fashion forming a multimeric L10(L12)X complex. In terms of processing, one or more lysine residues are methylated.

Forms part of the ribosomal stalk which helps the ribosome interact with GTP-bound translation factors. The polypeptide is Large ribosomal subunit protein uL11 (Borreliella burgdorferi (strain ATCC 35210 / DSM 4680 / CIP 102532 / B31) (Borrelia burgdorferi)).